Here is a 127-residue protein sequence, read N- to C-terminus: Fluoride-specific ion channel FluC (127 aa).

Helical transmembrane passes span 7–27 (LFLI…LTLL), 37–57 (FGTL…LAMF), 70–90 (FFVT…AEVI), and 102–122 (ITIT…GVFI). The Na(+) site is built by G77 and T80.

This sequence belongs to the fluoride channel Fluc/FEX (TC 1.A.43) family.

Its subcellular location is the cell inner membrane. It catalyses the reaction fluoride(in) = fluoride(out). Its activity is regulated as follows. Na(+) is not transported, but it plays an essential structural role and its presence is essential for fluoride channel function. In terms of biological role, fluoride-specific ion channel. Important for reducing fluoride concentration in the cell, thus reducing its toxicity. This chain is Fluoride-specific ion channel FluC, found in Histophilus somni (strain 129Pt) (Haemophilus somnus).